The following is a 199-amino-acid chain: V-set and transmembrane domain-containing protein 5 (199 aa).

The first 27 residues, Met-1–Cys-27, serve as a signal peptide directing secretion. Residues Leu-28–His-146 lie on the Extracellular side of the membrane. Positions Leu-35–Ser-138 constitute an Ig-like C2-type domain. N-linked (GlcNAc...) asparagine glycosylation is found at Asn-43, Asn-87, and Asn-101. A helical membrane pass occupies residues Phe-147 to Trp-167. The Cytoplasmic segment spans residues Val-168 to Cys-199. An important for CDC42-dependent filopodia induction region spans residues Cys-169–Lys-185.

Can homooligomerize through cis interactions within the same cell membrane. In terms of processing, N-glycosylated. In terms of tissue distribution, highly expressed in the central nervous system (CNS), with the highest expression in thalamus, hippocampus, cerebrum, midbrain and spinal cord. Also highly expressed in stomach, kidney and small intestine.

The protein resides in the cell membrane. Its subcellular location is the cell projection. It is found in the dendrite. It localises to the axon. Its function is as follows. Cell adhesion-like membrane protein of the central nervous system (CNS) which modulates both the position and complexity of central neurons by altering their membrane morphology and dynamics. Involved in the formation of neuronal dendrites and protrusions including dendritic filopodia. In synaptogenesis, regulates synapse formation by altering dendritic spine morphology and actin distribution. Promotes formation of unstable neuronal spines such as thin and branched types. Regulates neuronal morphogenesis and migration during cortical development in the brain. In Mus musculus (Mouse), this protein is V-set and transmembrane domain-containing protein 5.